The following is a 132-amino-acid chain: MKTIHVSVVTPDGPVYEDDVEMVSVKAKSGELGILPGHIPLVAPLEISAARLKKGGKTQYIAFSGGFLEVRPDNVTILAQAAERAEDIDVLRAKARKSGRTPLQSQQDDIDFKRAELALKRAMNRLSVAEMK.

It belongs to the ATPase epsilon chain family. F-type ATPases have 2 components, CF(1) - the catalytic core - and CF(0) - the membrane proton channel. CF(1) has five subunits: alpha(3), beta(3), gamma(1), delta(1), epsilon(1). CF(0) has three main subunits: a, b and c.

Its subcellular location is the cell membrane. In terms of biological role, produces ATP from ADP in the presence of a proton gradient across the membrane. The chain is ATP synthase epsilon chain (atpC) from Geobacillus stearothermophilus (Bacillus stearothermophilus).